The primary structure comprises 217 residues: Pyridoxine/pyridoxamine 5'-phosphate oxidase (217 aa).

Substrate is bound by residues 13 to 16 and Lys-71; that span reads RRDY. FMN contacts are provided by residues 66–71, 81–82, Lys-88, and Gln-110; these read RIVLLK and YT. Positions 128, 132, and 136 each coordinate substrate. FMN-binding positions include 145–146 and Trp-190; that span reads QS. Residue 196 to 198 coordinates substrate; that stretch reads RLH. Residue Arg-200 coordinates FMN.

It belongs to the pyridoxamine 5'-phosphate oxidase family. Homodimer. It depends on FMN as a cofactor.

The catalysed reaction is pyridoxamine 5'-phosphate + O2 + H2O = pyridoxal 5'-phosphate + H2O2 + NH4(+). It catalyses the reaction pyridoxine 5'-phosphate + O2 = pyridoxal 5'-phosphate + H2O2. It functions in the pathway cofactor metabolism; pyridoxal 5'-phosphate salvage; pyridoxal 5'-phosphate from pyridoxamine 5'-phosphate: step 1/1. It participates in cofactor metabolism; pyridoxal 5'-phosphate salvage; pyridoxal 5'-phosphate from pyridoxine 5'-phosphate: step 1/1. Its function is as follows. Catalyzes the oxidation of either pyridoxine 5'-phosphate (PNP) or pyridoxamine 5'-phosphate (PMP) into pyridoxal 5'-phosphate (PLP). This chain is Pyridoxine/pyridoxamine 5'-phosphate oxidase, found in Edwardsiella ictaluri (strain 93-146).